The primary structure comprises 378 residues: Biotin synthase, mitochondrial (378 aa).

A mitochondrion-targeting transit peptide spans 1-26 (MMLVRSVFRSQLRPSVSGGLQSASCY). The region spanning 79–308 (REVQQCTLLS…KAMVRLSAGR (230 aa)) is the Radical SAM core domain. [4Fe-4S] cluster is bound by residues Cys94, Cys98, and Cys101. Residues Cys138, Cys171, Cys231, and Arg303 each coordinate [2Fe-2S] cluster. Residues 357 to 378 (PPSFSEDDSESENCEKVASASH) are disordered.

The protein belongs to the radical SAM superfamily. Biotin synthase family. [4Fe-4S] cluster serves as cofactor. [2Fe-2S] cluster is required as a cofactor.

It localises to the mitochondrion. The enzyme catalyses (4R,5S)-dethiobiotin + (sulfur carrier)-SH + 2 reduced [2Fe-2S]-[ferredoxin] + 2 S-adenosyl-L-methionine = (sulfur carrier)-H + biotin + 2 5'-deoxyadenosine + 2 L-methionine + 2 oxidized [2Fe-2S]-[ferredoxin]. Its pathway is cofactor biosynthesis; biotin biosynthesis; biotin from 7,8-diaminononanoate: step 2/2. This Arabidopsis thaliana (Mouse-ear cress) protein is Biotin synthase, mitochondrial (BIO2).